The primary structure comprises 226 residues: Staphylococcal superantigen-like 1 (226 aa).

The N-terminal stretch at M1–A30 is a signal peptide.

This sequence belongs to the staphylococcal/streptococcal toxin family. As to quaternary structure, homodimer.

Its subcellular location is the secreted. In terms of biological role, mediates virulence by proteolytically cleaving host proteins, including collagens types I and IV as well as human cytokines IL8, IL17A, and IFN-gamma. This chain is Staphylococcal superantigen-like 1, found in Staphylococcus aureus (strain NCTC 8325 / PS 47).